The sequence spans 429 residues: MDTIFALASAPGKSGVAVLRISGSRAFHAGRVLAGGLPDAQRTSLRKLRDSDGSVIDEALVLAFESPNSFTGEDCVEFQTHGSPAIIAALMNELSALPGLRLAQPGEFTRRALENNRMDLAQVEGLADLIEAETEAQRKQALRTFSGELGQKVELWRKDLVRAMALLEVTIDFADEEVPEDVYPEVQELLGRVSQNLAAESAGTHAAERIRHGFEVAILGAPNVGKSSLLNRLAGREAAITSSIAGTTRDVVEVRLDLDGLPVTVLDTAGLRETQDEIEQIGISRAMARAESADLRIILIEDGRLPSGLGVADDDILVQAKSDILPSSSEFAISSVTGRGIDRLVKAVSHRLSLRAASAGTATHVRHRLAISSAVESLDLAKTKISEGFPVELVIEDLRQALVDLESLIGRVGVEQVLDEIFANFCLGK.

Residues R20, E77, and R117 each contribute to the (6S)-5-formyl-5,6,7,8-tetrahydrofolate site. In terms of domain architecture, TrmE-type G spans 213-353 (GFEVAILGAP…LVKAVSHRLS (141 aa)). K(+) is bound at residue N223. GTP contacts are provided by residues 223–228 (NVGKSS), 242–248 (SSIAGTT), and 267–270 (DTAG). Residue S227 participates in Mg(2+) binding. K(+)-binding residues include S242, I244, and T247. T248 contributes to the Mg(2+) binding site. Residue K429 participates in (6S)-5-formyl-5,6,7,8-tetrahydrofolate binding.

It belongs to the TRAFAC class TrmE-Era-EngA-EngB-Septin-like GTPase superfamily. TrmE GTPase family. Homodimer. Heterotetramer of two MnmE and two MnmG subunits. Requires K(+) as cofactor.

It is found in the cytoplasm. Exhibits a very high intrinsic GTPase hydrolysis rate. Involved in the addition of a carboxymethylaminomethyl (cmnm) group at the wobble position (U34) of certain tRNAs, forming tRNA-cmnm(5)s(2)U34. This is tRNA modification GTPase MnmE from Dinoroseobacter shibae (strain DSM 16493 / NCIMB 14021 / DFL 12).